The primary structure comprises 445 residues: Probable multidrug resistance protein YpnP (445 aa).

The next 12 membrane-spanning stretches (helical) occupy residues 15–35 (LVLFSMPIMLGNALQVSFQFI), 49–69 (LGAAAVSSTIVLTVLSFILGL), 95–115 (AFVVLLTGLSIGFGAAGFFLS), 136–156 (LQIQFIGILFLFGYNFISTVL), 168–188 (FIAFAVVLNTVLAPLFISVFR), 194–214 (AAYSTILSQGIAFLYGLFYVI), 240–260 (IPAGLQMMVITGGMMAIMSVV), 277–297 (LDSIITLPAMAAGTAVNSMAG), 314–334 (LGVIAVISCMLVIAVMIWVFG), 355–375 (LKWIAFFYPFIGVNFVLNGIV), 384–404 (VLVLNLISFWVLRYPFTALFS), and 411–431 (GIGLGIGMSFLFSSCAAFLYY).

Belongs to the multi antimicrobial extrusion (MATE) (TC 2.A.66.1) family.

It localises to the cell membrane. This is Probable multidrug resistance protein YpnP (ypnP) from Bacillus subtilis (strain 168).